A 466-amino-acid chain; its full sequence is MTTLDSILAGRYPAKAHARRVAERLQVGGSGRNGIIYLEAQKTRLIEDNDEAMHFRQRRPFFYLSGCPLPDSSLIYNIASDKLTLFIPPIDPEDVIWSGLPMSVAEALRLYDVDQVLHTTDVNATLASIASDGNGKSVAFAIEGQITEGIKFDGFLETNTSVLKGAIDSTRVVKDEYEIALLRKANDISAKAHIAAIEASKTATNEREIEAAFLATCIANGARDQAYHPIVACGQNGATLHYGRNDDDLVDPVTKAGKSSVLIDAGAEYRTYCADITRVFPLGGRFTSETQEIYKIVLQMQLEAIAMLKENVQWEDVHAHAHRIAIKGLLKLGILRGSEDELFEKRISVAFFPHGLGHYLGMDTHDTGGNPNYADKDTMFKYLRVRGRLPAGSVITVEPGIYFCRFIIEPYLTSPETSKYIDTNVLEKYWNVGGVRIEDNVHVTQQGYENLTTAPKAIEEVEVLAT.

D264, D275, E398, and E438 together coordinate Mn(2+).

Belongs to the peptidase M24B family. It depends on Mn(2+) as a cofactor.

It carries out the reaction Release of any N-terminal amino acid, including proline, that is linked to proline, even from a dipeptide or tripeptide.. Its function is as follows. Catalyzes the removal of a penultimate prolyl residue from the N-termini of peptides. This is Probable Xaa-Pro aminopeptidase pepP (pepP) from Aspergillus niger (strain ATCC MYA-4892 / CBS 513.88 / FGSC A1513).